The sequence spans 232 residues: Ubiquinone biosynthesis O-methyltransferase (232 aa).

4 residues coordinate S-adenosyl-L-methionine: Arg-36, Gly-55, Asp-76, and Leu-120.

Belongs to the methyltransferase superfamily. UbiG/COQ3 family.

The enzyme catalyses a 3-demethylubiquinol + S-adenosyl-L-methionine = a ubiquinol + S-adenosyl-L-homocysteine + H(+). It carries out the reaction a 3-(all-trans-polyprenyl)benzene-1,2-diol + S-adenosyl-L-methionine = a 2-methoxy-6-(all-trans-polyprenyl)phenol + S-adenosyl-L-homocysteine + H(+). The protein operates within cofactor biosynthesis; ubiquinone biosynthesis. Its function is as follows. O-methyltransferase that catalyzes the 2 O-methylation steps in the ubiquinone biosynthetic pathway. The protein is Ubiquinone biosynthesis O-methyltransferase of Pseudomonas aeruginosa (strain LESB58).